The primary structure comprises 271 residues: GPN-loop GTPase 3 (271 aa).

GTP is bound at residue 13–18 (GAGKST). The short motif at 70–72 (GPN) is the Gly-Pro-Asn (GPN)-loop; involved in dimer interface element. 173–176 (SKLD) provides a ligand contact to GTP.

This sequence belongs to the GPN-loop GTPase family. Heterodimers with GPN1 or GPN2. Binds to RNA polymerase II (RNAPII).

In terms of biological role, small GTPase required for proper nuclear import of RNA polymerase II and III (RNAPII and RNAPIII). May act at an RNAP assembly step prior to nuclear import. This Candida glabrata (strain ATCC 2001 / BCRC 20586 / JCM 3761 / NBRC 0622 / NRRL Y-65 / CBS 138) (Yeast) protein is GPN-loop GTPase 3.